Here is a 142-residue protein sequence, read N- to C-terminus: MGVMNKLMGFLGLENEEYIEETTTVEEEREEQESSHKRQPAISRTNNVVPFQAREKEGIRLILCEPRHYSDAQDIADNLRHRRPVVVNLHRVEKDQAKRIIDFLSGTVYALNGDIQKVGDTIFVCTPDHVDIQGTISSVLEE.

Over residues 21–31 (ETTTVEEEREE) the composition is skewed to acidic residues. Residues 21-46 (ETTTVEEEREEQESSHKRQPAISRTN) form a disordered region.

Belongs to the SepF family. Homodimer. Interacts with FtsZ.

It localises to the cytoplasm. Cell division protein that is part of the divisome complex and is recruited early to the Z-ring. Probably stimulates Z-ring formation, perhaps through the cross-linking of FtsZ protofilaments. Its function overlaps with FtsA. This chain is Cell division protein SepF, found in Brevibacillus brevis (strain 47 / JCM 6285 / NBRC 100599).